We begin with the raw amino-acid sequence, 353 residues long: Protein RecA (353 aa).

Position 68-75 (68-75 (GPESSGKT)) interacts with ATP.

This sequence belongs to the RecA family.

The protein localises to the cytoplasm. Its function is as follows. Can catalyze the hydrolysis of ATP in the presence of single-stranded DNA, the ATP-dependent uptake of single-stranded DNA by duplex DNA, and the ATP-dependent hybridization of homologous single-stranded DNAs. It interacts with LexA causing its activation and leading to its autocatalytic cleavage. The chain is Protein RecA from Roseiflexus sp. (strain RS-1).